The primary structure comprises 34 residues: CIANRNGCQPDGSQGNCCSGYCHKEPGWVAGYCR.

Cystine bridges form between C1-C18, C8-C22, and C17-C33.

The protein localises to the secreted. Its function is as follows. Has antifungal activity against C.glabrata. The chain is Antimicrobial peptide Alo-2 from Acrocinus longimanus (Giant harlequin beetle).